The chain runs to 238 residues: Tetrahydromethanopterin S-methyltransferase subunit A 1 (238 aa).

Residues 2–218 lie on the Cytoplasmic side of the membrane; the sequence is VEKKSPAEGW…RMFAGMYSGK (217 aa). Histidine 84 provides a ligand contact to 5-hydroxybenzimidazolylcob(I)amide. A helical transmembrane segment spans residues 219–237; that stretch reads VQGIMIGLAFTLTLGILLL. Valine 238 is a topological domain (extracellular).

It belongs to the MtrA family. In terms of assembly, the complex is composed of 8 subunits; MtrA, MtrB, MtrC, MtrD, MtrE, MtrF, MtrG and MtrH. It depends on 5-hydroxybenzimidazolylcob(I)amide as a cofactor.

It is found in the cell membrane. The catalysed reaction is 5-methyl-5,6,7,8-tetrahydromethanopterin + coenzyme M + 2 Na(+)(in) = 5,6,7,8-tetrahydromethanopterin + methyl-coenzyme M + 2 Na(+)(out). It functions in the pathway one-carbon metabolism; methanogenesis from CO(2); methyl-coenzyme M from 5,10-methylene-5,6,7,8-tetrahydromethanopterin: step 2/2. In terms of biological role, part of a complex that catalyzes the formation of methyl-coenzyme M and tetrahydromethanopterin from coenzyme M and methyl-tetrahydromethanopterin. This is an energy-conserving, sodium-ion translocating step. This Methanothermobacter marburgensis (strain ATCC BAA-927 / DSM 2133 / JCM 14651 / NBRC 100331 / OCM 82 / Marburg) (Methanobacterium thermoautotrophicum) protein is Tetrahydromethanopterin S-methyltransferase subunit A 1.